Consider the following 132-residue polypeptide: MSRKRTSPNRNVQIADQIQRDLSELIMREVKDPRIGIVTIQSVELTPDYAHAKIYFTALTGDPDKTQEALNHASGHLHNLLFKRLHIHTVPTLHFHYDQTIEKAVEMSRLIKEANSTRAKDDDEADAPAKDD.

Residues 113 to 132 form a disordered region; the sequence is EANSTRAKDDDEADAPAKDD.

It belongs to the RbfA family. Monomer. Binds 30S ribosomal subunits, but not 50S ribosomal subunits or 70S ribosomes.

Its subcellular location is the cytoplasm. Its function is as follows. One of several proteins that assist in the late maturation steps of the functional core of the 30S ribosomal subunit. Associates with free 30S ribosomal subunits (but not with 30S subunits that are part of 70S ribosomes or polysomes). Required for efficient processing of 16S rRNA. May interact with the 5'-terminal helix region of 16S rRNA. In Burkholderia ambifaria (strain MC40-6), this protein is Ribosome-binding factor A.